The following is a 323-amino-acid chain: Apolipoprotein E (323 aa).

The signal sequence occupies residues 1–18 (MKVLWAALVVTLLAGCWA). 8 repeat units span residues 86 to 107 (ALMDETMKEVKAYKAELDEQLG), 108 to 129 (PMTSETQARVAKELQAAQARLR), 130 to 151 (SDMEDVRNRLTQYRGELQAMLG), 152 to 173 (QSSEELRARFASHMRKLRKRVL), 174 to 195 (RDAEDLQRRLAVYKAGVREGAE), 196 to 217 (RSVSSIRERLWPLLEQARERNA), 218 to 239 (KVGALATQPLLERADALGQQLR), and 240 to 261 (GQLEEMSSRARGHLEEMREQIQ). An 8 X 22 AA approximate tandem repeats region spans residues 86–261 (ALMDETMKEV…HLEEMREQIQ (176 aa)). M149 carries the methionine sulfoxide modification. S153 carries the phosphoserine modification. The interval 164-174 (HMRKLRKRVLR) is LDL and other lipoprotein receptors binding. 168–171 (LRKR) contributes to the heparin binding site. Positions 216 to 296 (NAKVGALATQ…SWFEPLLEDM (81 aa)) are lipid-binding and lipoprotein association. A heparin-binding site is contributed by 235–242 (GQQLRGQL). Residues 272-323 (DQIRQKAEAFQARLKSWFEPLLEDMQRQWDGLVEKVQAAVATIPTSKPVEEP) form a homooligomerization region. The tract at residues 284–296 (RLKSWFEPLLEDM) is specificity for association with VLDL.

The protein belongs to the apolipoprotein A1/A4/E family. Homotetramer. May interact with ABCA1; functionally associated with ABCA1 in the biogenesis of HDLs. May interact with APP/A4 amyloid-beta peptide; the interaction is extremely stable in vitro but its physiological significance is unclear. May interact with MAPT. May interact with MAP2. In the cerebrospinal fluid, interacts with secreted SORL1. Interacts with PMEL; this allows the loading of PMEL luminal fragment on ILVs to induce fibril nucleation. APOE exists as multiple glycosylated and sialylated glycoforms within cells and in plasma. The extent of glycosylation and sialylation are tissue and context specific. In terms of processing, glycated in plasma VLDL. Post-translationally, phosphorylated by FAM20C in the extracellular medium.

It localises to the secreted. It is found in the extracellular space. The protein resides in the extracellular matrix. The protein localises to the extracellular vesicle. Its subcellular location is the endosome. It localises to the multivesicular body. Functionally, APOE is an apolipoprotein, a protein associating with lipid particles, that mainly functions in lipoprotein-mediated lipid transport between organs via the plasma and interstitial fluids. APOE is a core component of plasma lipoproteins and is involved in their production, conversion and clearance. Apolipoproteins are amphipathic molecules that interact both with lipids of the lipoprotein particle core and the aqueous environment of the plasma. As such, APOE associates with chylomicrons, chylomicron remnants, very low density lipoproteins (VLDL) and intermediate density lipoproteins (IDL) but shows a preferential binding to high-density lipoproteins (HDL). It also binds a wide range of cellular receptors including the LDL receptor/LDLR and the very low-density lipoprotein receptor/VLDLR that mediate the cellular uptake of the APOE-containing lipoprotein particles. Finally, APOE also has a heparin-binding activity and binds heparan-sulfate proteoglycans on the surface of cells, a property that supports the capture and the receptor-mediated uptake of APOE-containing lipoproteins by cells. The sequence is that of Apolipoprotein E (APOE) from Canis lupus familiaris (Dog).